We begin with the raw amino-acid sequence, 391 residues long: NADH-quinone oxidoreductase subunit D (391 aa).

The protein belongs to the complex I 49 kDa subunit family. As to quaternary structure, NDH-1 is composed of 14 different subunits. Subunits NuoB, C, D, E, F, and G constitute the peripheral sector of the complex.

Its subcellular location is the cell inner membrane. The catalysed reaction is a quinone + NADH + 5 H(+)(in) = a quinol + NAD(+) + 4 H(+)(out). Functionally, NDH-1 shuttles electrons from NADH, via FMN and iron-sulfur (Fe-S) centers, to quinones in the respiratory chain. The immediate electron acceptor for the enzyme in this species is believed to be ubiquinone. Couples the redox reaction to proton translocation (for every two electrons transferred, four hydrogen ions are translocated across the cytoplasmic membrane), and thus conserves the redox energy in a proton gradient. In Rickettsia rickettsii (strain Sheila Smith), this protein is NADH-quinone oxidoreductase subunit D.